A 955-amino-acid polypeptide reads, in one-letter code: Structure-specific endonuclease subunit SLX4 (955 aa).

7 disordered regions span residues 75-173, 189-231, 352-376, 539-608, 621-648, 705-784, and 819-846; these read QAEQ…RTTS, PVTT…TVSR, GPSN…KKPR, EMQK…PTKI, PIVA…PPPR, AAGQ…ASPD, and LDSD…EKDS. The segment covering 123–137 has biased composition (basic residues); that stretch reads RKARKTANGVTKKKR. Residues 150 to 159 show a composition bias toward polar residues; that stretch reads NEITTPTKNQ. A compositionally biased stretch (low complexity) spans 189-198; the sequence is PVTTSTTDLT. Basic residues predominate over residues 209 to 225; the sequence is TKSRVRKTSSAASRKKK. Residues 352–362 show a composition bias toward polar residues; it reads GPSNDSKIPNQ. A compositionally biased stretch (basic and acidic residues) spans 539–551; the sequence is EMQKSPSRSEPKG. Residues 579–601 are compositionally biased toward polar residues; the sequence is SANSAEHTLKTQASKSTHFASTT. 2 stretches are compositionally biased toward low complexity: residues 705 to 720 and 727 to 737; these read AAGQ…RTSA and KTSTAAAAAKS. Composition is skewed to basic residues over residues 738 to 748 and 767 to 776; these read PTKRPVGRPRK and KRPRGRPKKN. Low complexity predominate over residues 828-841; the sequence is SPSPSLSPEPVFSS.

This sequence belongs to the SLX4 family. Forms a heterodimer with SLX1. Post-translationally, phosphorylated in response to DNA damage.

Its subcellular location is the nucleus. Its function is as follows. Regulatory subunit of the SLX1-SLX4 structure-specific endonuclease that resolves DNA secondary structures generated during DNA repair and recombination. Has endonuclease activity towards branched DNA substrates, introducing single-strand cuts in duplex DNA close to junctions with ss-DNA. The polypeptide is Structure-specific endonuclease subunit SLX4 (Pyricularia oryzae (strain 70-15 / ATCC MYA-4617 / FGSC 8958) (Rice blast fungus)).